A 216-amino-acid chain; its full sequence is Probable nicotinate-nucleotide adenylyltransferase (216 aa).

The protein belongs to the NadD family.

It carries out the reaction nicotinate beta-D-ribonucleotide + ATP + H(+) = deamido-NAD(+) + diphosphate. It participates in cofactor biosynthesis; NAD(+) biosynthesis; deamido-NAD(+) from nicotinate D-ribonucleotide: step 1/1. Its function is as follows. Catalyzes the reversible adenylation of nicotinate mononucleotide (NaMN) to nicotinic acid adenine dinucleotide (NaAD). This is Probable nicotinate-nucleotide adenylyltransferase from Geobacillus kaustophilus (strain HTA426).